A 257-amino-acid chain; its full sequence is Acetyl-coenzyme A carboxylase carboxyl transferase subunit beta (257 aa).

The 253-residue stretch at 5 to 257 folds into the CoA carboxyltransferase N-terminal domain; it reads VFTKCERCKQ…DLERLLGFVG (253 aa). Cys9, Cys12, Cys28, and Cys31 together coordinate Zn(2+). A C4-type zinc finger spans residues 9-31; the sequence is CERCKQPVYEKDLRARFNVCPNC.

The protein belongs to the AccD/PCCB family. Acetyl-CoA carboxylase is a heterohexamer composed of biotin carboxyl carrier protein (AccB), biotin carboxylase (AccC) and two subunits each of ACCase subunit alpha (AccA) and ACCase subunit beta (AccD). The cofactor is Zn(2+).

It localises to the cytoplasm. The catalysed reaction is N(6)-carboxybiotinyl-L-lysyl-[protein] + acetyl-CoA = N(6)-biotinyl-L-lysyl-[protein] + malonyl-CoA. Its pathway is lipid metabolism; malonyl-CoA biosynthesis; malonyl-CoA from acetyl-CoA: step 1/1. Its function is as follows. Component of the acetyl coenzyme A carboxylase (ACC) complex. Biotin carboxylase (BC) catalyzes the carboxylation of biotin on its carrier protein (BCCP) and then the CO(2) group is transferred by the transcarboxylase to acetyl-CoA to form malonyl-CoA. The protein is Acetyl-coenzyme A carboxylase carboxyl transferase subunit beta of Rubrobacter xylanophilus (strain DSM 9941 / JCM 11954 / NBRC 16129 / PRD-1).